Reading from the N-terminus, the 89-residue chain is Large ribosomal subunit protein bL27 (89 aa).

Positions Met1–Ile23 are disordered.

This sequence belongs to the bacterial ribosomal protein bL27 family.

This is Large ribosomal subunit protein bL27 from Rhodopseudomonas palustris (strain BisA53).